A 527-amino-acid polypeptide reads, in one-letter code: Peptide chain release factor 3 (527 aa).

Positions 9–277 (AKRRTFAIIS…AVVDWAPRPL (269 aa)) constitute a tr-type G domain. GTP is bound by residues 18–25 (SHPDAGKT), 86–90 (DTPGH), and 140–143 (NKLD).

It belongs to the TRAFAC class translation factor GTPase superfamily. Classic translation factor GTPase family. PrfC subfamily.

Its subcellular location is the cytoplasm. In terms of biological role, increases the formation of ribosomal termination complexes and stimulates activities of RF-1 and RF-2. It binds guanine nucleotides and has strong preference for UGA stop codons. It may interact directly with the ribosome. The stimulation of RF-1 and RF-2 is significantly reduced by GTP and GDP, but not by GMP. This is Peptide chain release factor 3 from Pseudomonas fluorescens (strain SBW25).